Reading from the N-terminus, the 681-residue chain is Nucleolar GTP-binding protein 1 (681 aa).

The 172-residue stretch at 170 to 341 folds into the OBG-type G domain; it reads RTLILCGFPN…LRDRACDELL (172 aa). Residues 176-183, 222-226, and 290-293 contribute to the GTP site; these read GFPNVGKS, DTPGI, and NKVD.

Belongs to the TRAFAC class OBG-HflX-like GTPase superfamily. OBG GTPase family. NOG subfamily. As to expression, ubiquitously expressed.

Its subcellular location is the nucleus. It localises to the nucleolus. Functionally, involved in the biogenesis of the 60S ribosomal subunit. Has a role in regulating longevity, growth and brood size. May regulate fat storage via the insulin/IGF pathway. This is Nucleolar GTP-binding protein 1 from Caenorhabditis elegans.